Here is a 145-residue protein sequence, read N- to C-terminus: UPF0299 membrane protein plu1549 (145 aa).

Helical transmembrane passes span 6–26 (VLIV…CLLT), 34–54 (LPII…LLAF), 65–85 (GCSL…VGVM), and 95–115 (IIPI…IVAY).

Belongs to the UPF0299 family.

It is found in the cell inner membrane. The polypeptide is UPF0299 membrane protein plu1549 (Photorhabdus laumondii subsp. laumondii (strain DSM 15139 / CIP 105565 / TT01) (Photorhabdus luminescens subsp. laumondii)).